Reading from the N-terminus, the 177-residue chain is ATP synthase subunit delta (177 aa).

It belongs to the ATPase delta chain family. As to quaternary structure, F-type ATPases have 2 components, F(1) - the catalytic core - and F(0) - the membrane proton channel. F(1) has five subunits: alpha(3), beta(3), gamma(1), delta(1), epsilon(1). F(0) has three main subunits: a(1), b(2) and c(10-14). The alpha and beta chains form an alternating ring which encloses part of the gamma chain. F(1) is attached to F(0) by a central stalk formed by the gamma and epsilon chains, while a peripheral stalk is formed by the delta and b chains.

The protein localises to the cell inner membrane. In terms of biological role, f(1)F(0) ATP synthase produces ATP from ADP in the presence of a proton or sodium gradient. F-type ATPases consist of two structural domains, F(1) containing the extramembraneous catalytic core and F(0) containing the membrane proton channel, linked together by a central stalk and a peripheral stalk. During catalysis, ATP synthesis in the catalytic domain of F(1) is coupled via a rotary mechanism of the central stalk subunits to proton translocation. Functionally, this protein is part of the stalk that links CF(0) to CF(1). It either transmits conformational changes from CF(0) to CF(1) or is implicated in proton conduction. This is ATP synthase subunit delta from Psychromonas ingrahamii (strain DSM 17664 / CCUG 51855 / 37).